The chain runs to 363 residues: Phosphoribosylformylglycinamidine cyclo-ligase (363 aa).

This sequence belongs to the AIR synthase family.

The protein resides in the cytoplasm. It catalyses the reaction 2-formamido-N(1)-(5-O-phospho-beta-D-ribosyl)acetamidine + ATP = 5-amino-1-(5-phospho-beta-D-ribosyl)imidazole + ADP + phosphate + H(+). It functions in the pathway purine metabolism; IMP biosynthesis via de novo pathway; 5-amino-1-(5-phospho-D-ribosyl)imidazole from N(2)-formyl-N(1)-(5-phospho-D-ribosyl)glycinamide: step 2/2. The polypeptide is Phosphoribosylformylglycinamidine cyclo-ligase (Brucella anthropi (strain ATCC 49188 / DSM 6882 / CCUG 24695 / JCM 21032 / LMG 3331 / NBRC 15819 / NCTC 12168 / Alc 37) (Ochrobactrum anthropi)).